The sequence spans 640 residues: Threonine--tRNA ligase (640 aa).

The TGS domain maps to 1–61 (MPVVTLPDGS…DKDSHLAIIT (61 aa)). A catalytic region spans residues 242 to 533 (DHRRLGKQLD…LIENHAGNMP (292 aa)). The Zn(2+) site is built by Cys-333, His-384, and His-510.

The protein belongs to the class-II aminoacyl-tRNA synthetase family. As to quaternary structure, homodimer. The cofactor is Zn(2+).

Its subcellular location is the cytoplasm. The catalysed reaction is tRNA(Thr) + L-threonine + ATP = L-threonyl-tRNA(Thr) + AMP + diphosphate + H(+). Its function is as follows. Catalyzes the attachment of threonine to tRNA(Thr) in a two-step reaction: L-threonine is first activated by ATP to form Thr-AMP and then transferred to the acceptor end of tRNA(Thr). Also edits incorrectly charged L-seryl-tRNA(Thr). This is Threonine--tRNA ligase from Polynucleobacter asymbioticus (strain DSM 18221 / CIP 109841 / QLW-P1DMWA-1) (Polynucleobacter necessarius subsp. asymbioticus).